Consider the following 342-residue polypeptide: MLKDQNLDIERKQDHIEINLTQNVESTLKSGFESIHFIHNALPELNYDSINTTTTFLGKSLQAPILISSMTGGTTRARDINYRLAQVAQKAGIAMGLGSMRVLLTEPDTIKTFAVRHIAPDIPLLANIGAVQLNYGVTPKECQYLVDAIKADALILHLNVLQELTQPEGNRNWEKLLPKIREVVHYLSIPVIVKEVGYGLSKKVAESLIDAGVKVLDIAGSGGTSWSQVEAYRATNSLQNRIASSFINWGIPTLDSLKMVREVSKDIPIITSGGLKSGIDGAKAIRIGANIFGLAGQFLKAADTSESLLFEEIQLIIEQLKITMLCTGSRTLKDLAKAEIRL.

11–12 (RK) lines the substrate pocket. FMN-binding positions include serine 68, 69–71 (SMT), serine 99, and asparagine 127. 99–101 (SMR) is a binding site for substrate. Glutamine 162 contributes to the substrate binding site. Mg(2+) is bound at residue glutamate 163. Residues lysine 194, threonine 224, 274 to 276 (GLK), and 295 to 296 (AG) contribute to the FMN site.

It belongs to the IPP isomerase type 2 family. In terms of assembly, homooctamer. Dimer of tetramers. The cofactor is FMN. It depends on NADPH as a cofactor. Mg(2+) serves as cofactor.

Its subcellular location is the cytoplasm. It catalyses the reaction isopentenyl diphosphate = dimethylallyl diphosphate. In terms of biological role, involved in the biosynthesis of isoprenoids. Catalyzes the 1,3-allylic rearrangement of the homoallylic substrate isopentenyl (IPP) to its allylic isomer, dimethylallyl diphosphate (DMAPP). In Rickettsia rickettsii (strain Iowa), this protein is Isopentenyl-diphosphate delta-isomerase.